Here is a 258-residue protein sequence, read N- to C-terminus: MNWTSLVYLWFIFKSIFADLTSHQLKSKVVFLDTTISDEVARSYLGSEDGNVTHGNYEILSIANGANDGNITSYLCQLPRTKKMAPTKPKPTMSVHELKSRAIDLISESFVEGTSCVFSFNLHANYWTIGYCHGINVIQFHENLDDFISGIHKPHSPNHVYTLGNFSKQTSPLEFEFDTKERTISQRLLGEVCDLTGEPRTIDTIYRCDHILEIVELTEIRTCQYELHINVPKLCSLPEFKRTNLEEGVSEILCTRIE.

A signal peptide spans 1 to 18; that stretch reads MNWTSLVYLWFIFKSIFA. N-linked (GlcNAc...) asparagine glycans are attached at residues N2, N51, and N70. The region spanning 114 to 237 is the MRH domain; sequence TSCVFSFNLH…HINVPKLCSL (124 aa). C116 and C132 form a disulfide bridge. A mannooligosaccharide derivative-binding residues include W127 and Q139. N165 carries N-linked (GlcNAc...) asparagine glycosylation. Intrachain disulfides connect C193/C223 and C208/C235. D194, R200, E219, and Y225 together coordinate a mannooligosaccharide derivative.

Belongs to the OS-9 family. As to quaternary structure, interacts with missfolded ER lumenal proteins.

The protein resides in the endoplasmic reticulum membrane. Functionally, lectin involved in the quality control of the secretory pathway. As a member of the endoplasmic reticulum-associated degradation lumenal (ERAD-L) surveillance system, targets misfolded endoplasmic reticulum lumenal glycoproteins for degradation. The chain is Protein OS-9 homolog (YOS9) from Candida albicans (strain SC5314 / ATCC MYA-2876) (Yeast).